The primary structure comprises 220 residues: MGQKVNPVGLRVGVIRDWDSKWYAGKKDYADLLHEDIAIREHVEGRLKDASVSKVEIERAANRVNITISTAKPGMVIGKGGSEVEALRKSLNELTGKRVHINISEIKQADLDAKLVAENIARQLENRISFRRAMKQAIQRTMRAGAKGIKTQVSGRLGGADIARAEHYSEGTVPLHTLRADIDYGTAEADTTYGKIGVKIWVYRGEVLPTKGTNKEEGGN.

Residues 39-107 (IREHVEGRLK…RVHINISEIK (69 aa)) form the KH type-2 domain.

The protein belongs to the universal ribosomal protein uS3 family. Part of the 30S ribosomal subunit. Forms a tight complex with proteins S10 and S14.

Its function is as follows. Binds the lower part of the 30S subunit head. Binds mRNA in the 70S ribosome, positioning it for translation. This Shouchella clausii (strain KSM-K16) (Alkalihalobacillus clausii) protein is Small ribosomal subunit protein uS3.